The sequence spans 106 residues: Small ribosomal subunit protein uS10 (106 aa).

It belongs to the universal ribosomal protein uS10 family. As to quaternary structure, part of the 30S ribosomal subunit.

In terms of biological role, involved in the binding of tRNA to the ribosomes. The sequence is that of Small ribosomal subunit protein uS10 from Parasynechococcus marenigrum (strain WH8102).